Reading from the N-terminus, the 354-residue chain is MAGNSIGQFFRVTTFGESHGSALGGIIDGVPPSLPLTEKDLQYDLDRRRPGSSRYTSQRSELDTVEILSGVFNGKTTGTSIGLLIKNTDHRPQDYEKIKNLYRPGHADYTYEKKYGFRDYRGGGRSSARETAVRVAAGAVAKKYLFNKKNIKIRGFLAQMGDVHCNLKDWRQVNNNPFFCPDLEKLTALDTLINNLQKSGDSIGAKITVIAENIPIGLGEPVFDRLDADLAHALMSINAVKGVEIGDGFSVITKRGSEHRDEMTLDGFNSNNSGGILGGISNGQPIIMHIAIKPTSSITVPGKTITRENEETQVVTIGRHDPCIGIRVVPIAEAMVAIVVIDHLLRQRAQCEKI.

Positions 48 and 54 each coordinate NADP(+). FMN-binding positions include 125-127 (RSS), 238-239 (NA), glycine 278, 293-297 (KPTSS), and arginine 319.

The protein belongs to the chorismate synthase family. As to quaternary structure, homotetramer. The cofactor is FMNH2.

It catalyses the reaction 5-O-(1-carboxyvinyl)-3-phosphoshikimate = chorismate + phosphate. It functions in the pathway metabolic intermediate biosynthesis; chorismate biosynthesis; chorismate from D-erythrose 4-phosphate and phosphoenolpyruvate: step 7/7. Catalyzes the anti-1,4-elimination of the C-3 phosphate and the C-6 proR hydrogen from 5-enolpyruvylshikimate-3-phosphate (EPSP) to yield chorismate, which is the branch point compound that serves as the starting substrate for the three terminal pathways of aromatic amino acid biosynthesis. This reaction introduces a second double bond into the aromatic ring system. This Blochmanniella pennsylvanica (strain BPEN) protein is Chorismate synthase.